The primary structure comprises 608 residues: Zinc finger protein 652 (608 aa).

Phosphoserine is present on Ser-57. Residues 61 to 232 (VLADTKMSKP…KRATKEAKAP (172 aa)) are disordered. Over residues 71-97 (HLHETEEQPYFREPRAVSDVHTVKEDR) the composition is skewed to basic and acidic residues. Acidic residues-rich tracts occupy residues 98–108 (ENSDDTEEEEE) and 151–162 (EEDEEETEEEAT). Residue Ser-100 is modified to Phosphoserine. Thr-103 bears the Phosphothreonine mark. Over residues 194–208 (AASAAAATTSPAPRT) the composition is skewed to low complexity. Ser-196 and Ser-203 each carry phosphoserine. The C2H2-type 1 zinc finger occupies 244 to 267 (LTCEKCPRVFNTRWYLEKHMNVTH). The C2H2-type 2; degenerate zinc-finger motif lies at 271–293 (QICDKCGKKFVLESELSLHQQTD). C2H2-type zinc fingers lie at residues 298–321 (IQCVSCNKSFKKLWSLHEHIKIVH), 328–350 (FACEICEKKFYTMAHVRKHMVAH), 356–378 (FTCETCGKSFKRSMSLKVHSLQH), 384–406 (FRCENCDERFQYKYQLRSHMSIH), 412–434 (FMCQWCGKDFNMKQYFDEHMKTH), and 440–462 (FICEICGKSFTSRPNMKRHRRTH). Residues 468-491 (YPCDVCGQRFRFSNMLKAHKEKCF) form a C2H2-type 9; degenerate zinc finger. Positions 497–608 (VNVPPAVQIP…KNSAAPAQHH (112 aa)) are mediates interaction with CBFA2T3.

The protein belongs to the krueppel C2H2-type zinc-finger protein family. In terms of assembly, interacts with CBFA2T3.

It is found in the nucleus. Its function is as follows. Functions as a transcriptional repressor. This chain is Zinc finger protein 652 (Znf652), found in Mus musculus (Mouse).